The sequence spans 429 residues: Enolase (429 aa).

Glutamine 163 lines the (2R)-2-phosphoglycerate pocket. The active-site Proton donor is glutamate 205. 3 residues coordinate Mg(2+): aspartate 242, glutamate 285, and aspartate 312. Lysine 337, arginine 366, serine 367, and lysine 388 together coordinate (2R)-2-phosphoglycerate. The active-site Proton acceptor is lysine 337.

Belongs to the enolase family. Mg(2+) is required as a cofactor.

The protein resides in the cytoplasm. The protein localises to the secreted. It localises to the cell surface. The catalysed reaction is (2R)-2-phosphoglycerate = phosphoenolpyruvate + H2O. Its pathway is carbohydrate degradation; glycolysis; pyruvate from D-glyceraldehyde 3-phosphate: step 4/5. In terms of biological role, catalyzes the reversible conversion of 2-phosphoglycerate (2-PG) into phosphoenolpyruvate (PEP). It is essential for the degradation of carbohydrates via glycolysis. The polypeptide is Enolase (Azoarcus sp. (strain BH72)).